The chain runs to 145 residues: 3-dehydroquinate dehydratase (145 aa).

Tyr-22 (proton acceptor) is an active-site residue. Substrate-binding residues include Asn-71, His-77, and Asp-84. His-97 functions as the Proton donor in the catalytic mechanism. Residues 98 to 99 (LS) and Arg-108 each bind substrate.

It belongs to the type-II 3-dehydroquinase family. Homododecamer.

It catalyses the reaction 3-dehydroquinate = 3-dehydroshikimate + H2O. It functions in the pathway metabolic intermediate biosynthesis; chorismate biosynthesis; chorismate from D-erythrose 4-phosphate and phosphoenolpyruvate: step 3/7. Catalyzes a trans-dehydration via an enolate intermediate. This Francisella philomiragia subsp. philomiragia (strain ATCC 25017 / CCUG 19701 / FSC 153 / O#319-036) protein is 3-dehydroquinate dehydratase.